Consider the following 323-residue polypeptide: 4-hydroxy-3-methylbut-2-enyl diphosphate reductase (323 aa).

C13 contacts [4Fe-4S] cluster. Residues H42 and H75 each coordinate (2E)-4-hydroxy-3-methylbut-2-enyl diphosphate. H42 and H75 together coordinate dimethylallyl diphosphate. H42 and H75 together coordinate isopentenyl diphosphate. C97 is a binding site for [4Fe-4S] cluster. (2E)-4-hydroxy-3-methylbut-2-enyl diphosphate is bound at residue H125. Residue H125 participates in dimethylallyl diphosphate binding. Isopentenyl diphosphate is bound at residue H125. The active-site Proton donor is the E127. Residue T168 participates in (2E)-4-hydroxy-3-methylbut-2-enyl diphosphate binding. C198 is a binding site for [4Fe-4S] cluster. S226, S227, N228, and S270 together coordinate (2E)-4-hydroxy-3-methylbut-2-enyl diphosphate. Residues S226, S227, N228, and S270 each coordinate dimethylallyl diphosphate. The isopentenyl diphosphate site is built by S226, S227, N228, and S270.

Belongs to the IspH family. It depends on [4Fe-4S] cluster as a cofactor.

The enzyme catalyses isopentenyl diphosphate + 2 oxidized [2Fe-2S]-[ferredoxin] + H2O = (2E)-4-hydroxy-3-methylbut-2-enyl diphosphate + 2 reduced [2Fe-2S]-[ferredoxin] + 2 H(+). The catalysed reaction is dimethylallyl diphosphate + 2 oxidized [2Fe-2S]-[ferredoxin] + H2O = (2E)-4-hydroxy-3-methylbut-2-enyl diphosphate + 2 reduced [2Fe-2S]-[ferredoxin] + 2 H(+). It functions in the pathway isoprenoid biosynthesis; dimethylallyl diphosphate biosynthesis; dimethylallyl diphosphate from (2E)-4-hydroxy-3-methylbutenyl diphosphate: step 1/1. The protein operates within isoprenoid biosynthesis; isopentenyl diphosphate biosynthesis via DXP pathway; isopentenyl diphosphate from 1-deoxy-D-xylulose 5-phosphate: step 6/6. Functionally, catalyzes the conversion of 1-hydroxy-2-methyl-2-(E)-butenyl 4-diphosphate (HMBPP) into a mixture of isopentenyl diphosphate (IPP) and dimethylallyl diphosphate (DMAPP). Acts in the terminal step of the DOXP/MEP pathway for isoprenoid precursor biosynthesis. The polypeptide is 4-hydroxy-3-methylbut-2-enyl diphosphate reductase (Nitrosomonas europaea (strain ATCC 19718 / CIP 103999 / KCTC 2705 / NBRC 14298)).